The sequence spans 1310 residues: Rho family-interacting cell polarization regulator 2 (1310 aa).

A phosphoserine mark is found at S123 and S178. Positions 196-254 (MHNLGHKNTNTPKEPQPKRVEEVYRALKNGLDEYLEFHQTELDKLTAQLKDMKRNSRLG) are involved in cell filopodia formation. A coiled-coil region spans residues 224–253 (NGLDEYLEFHQTELDKLTAQLKDMKRNSRL). S508 is modified (phosphoserine). Residues 588-608 (SSLSSQNEGTEDSSSASSRNS) show a composition bias toward polar residues. Positions 588 to 639 (SSLSSQNEGTEDSSSASSRNSLGEDHEPKSHSKSDTVEPKKPSVDARSGTES) are disordered. Residues 609 to 631 (LGEDHEPKSHSKSDTVEPKKPSV) show a composition bias toward basic and acidic residues. S682 bears the Phosphoserine mark.

This sequence belongs to the RIPOR family. In terms of assembly, homooligomer; homooligomerization is regulated by RHOC and leads to the formation of concatemers through the association of N- and C-termini. Interacts (phosphorylated form) with 14-3-3 proteins; these interactions occur during myogenic cell differentiation and also induces T cell proliferation arrest. Interacts (phosphorylated form) with HDAC6; this interaction occurs during early myogenic differentiation, prevents HDAC6 to deacetylate tubulin and also induces T cell proliferation arrest. Interacts with DYSF; this interaction occurs during early myogenic differentiation. Interacts with MYOF. Interacts (via active GTP- or inactive GDP-bound forms) with RHOA; this interaction is direct, blocks the loading of GTP to RHOA and decreases upon chemokine CCL19 stimulation in primary T lymphocytes. Interacts with RHOC. Interacts (via phosphorylated form) with YWHAB; this interaction occurs in a chemokine-dependent manner and does not compete for binding of RIPOR2 with RHOA nor blocks inhibition of RIPOR2-mediated RHOA activity. Interacts with YWHAE. Interacts with YWHAQ. Phosphorylated. Chemokine-induced phosphorylation in neutrophils occurs in a PKC- and AKT-dependent manner, resulting in RIPOR2 interaction with YWHAB and stabilization. Phosphorylated by PKCA, AKT1 and MAPKAPK1A; in vitro. As to expression, expressed in the cochlea (at protein level).

It is found in the cytoplasm. Its subcellular location is the cytoskeleton. It localises to the cell projection. The protein resides in the filopodium. The protein localises to the apical cell membrane. It is found in the stereocilium. Its subcellular location is the stereocilium membrane. Acts as an inhibitor of the small GTPase RHOA and plays several roles in the regulation of myoblast and hair cell differentiation, lymphocyte T proliferation and neutrophil polarization. Plays a role in fetal mononuclear myoblast differentiation by promoting filopodia and myotube formation. Maintains naive T lymphocytes in a quiescent state and prevents chemokine-induced T lymphocyte responses, such as cell adhesion, polarization and migration. Involved also in the regulation of neutrophil polarization, chemotaxis and adhesion. Required for normal development of inner and outer hair cell stereocilia within the cochlea of the inner ear. Plays a role for maintaining the structural organization of the basal domain of stereocilia. Involved in mechanosensory hair cell function. Required for normal hearing. This is Rho family-interacting cell polarization regulator 2 from Rattus norvegicus (Rat).